The sequence spans 88 residues: Small ribosomal subunit protein bS20 (88 aa).

Positions 1 to 22 (MANTPSAKKAVNKIAKRTQVNK) are disordered.

Belongs to the bacterial ribosomal protein bS20 family.

Functionally, binds directly to 16S ribosomal RNA. This is Small ribosomal subunit protein bS20 from Bartonella bacilliformis (strain ATCC 35685 / KC583 / Herrer 020/F12,63).